A 304-amino-acid polypeptide reads, in one-letter code: Release factor glutamine methyltransferase (304 aa).

Asp-144 and Asn-188 together coordinate S-adenosyl-L-methionine. Substrate is bound at residue Asn-188 to Tyr-191.

It belongs to the protein N5-glutamine methyltransferase family. PrmC subfamily.

It catalyses the reaction L-glutaminyl-[peptide chain release factor] + S-adenosyl-L-methionine = N(5)-methyl-L-glutaminyl-[peptide chain release factor] + S-adenosyl-L-homocysteine + H(+). In terms of biological role, methylates the class 1 translation termination release factors RF1/PrfA and RF2/PrfB on the glutamine residue of the universally conserved GGQ motif. In Mycobacterium tuberculosis (strain ATCC 25618 / H37Rv), this protein is Release factor glutamine methyltransferase.